The primary structure comprises 67 residues: V-type proton ATPase subunit e (67 aa).

The Lumenal portion of the chain corresponds to methionine 1–glycine 2. The helical transmembrane segment at glycine 3–valine 23 threads the bilayer. Over serine 24–methionine 35 the chain is Cytoplasmic. The helical transmembrane segment at serine 36 to leucine 56 threads the bilayer. Topologically, residues histidine 57–glutamate 67 are lumenal.

It belongs to the V-ATPase e1/e2 subunit family. As to quaternary structure, V-ATPase is a heteromultimeric enzyme composed of a peripheral catalytic V1 complex (components A to H) attached to an integral membrane V0 proton pore complex (components: a, c, c', c'', d, e, f and VOA1).

Its subcellular location is the vacuole membrane. In terms of biological role, subunit of the V0 complex of vacuolar(H+)-ATPase (V-ATPase), a multisubunit enzyme composed of a peripheral complex (V1) that hydrolyzes ATP and a membrane integral complex (V0) that translocates protons. V-ATPase is responsible for acidifying and maintaining the pH of intracellular compartments. This chain is V-type proton ATPase subunit e (vma9), found in Schizosaccharomyces pombe (strain 972 / ATCC 24843) (Fission yeast).